Here is a 303-residue protein sequence, read N- to C-terminus: Major fimbrium anchoring subunit FimB (303 aa).

Residues 1–22 (MNDAKKYIVSVLILLVAGMFGG) form the signal peptide. C23 carries N-palmitoyl cysteine lipidation. A lipid anchor (S-diacylglycerol cysteine) is attached at C23.

This sequence belongs to the bacteroidetes fimbrillin superfamily. FimB/Mfa2 family. FimB is not part of the fimbrium itself, but anchors the fimbrium in the outer membrane. Linear, head-to-tail oligomerization of fimbrial subunits mediates assembly of the fimbrium stalk, while the minor components FimC, FimD and FimE probably form the fimbrium tip. The anchoring subunit FimB limits fimbrium length and is important for solid fimbrium attachment to the outer membrane. In its absence, the major fimbriae become very long and are easily detached from the membrane.

It is found in the cell outer membrane. Functionally, anchoring subunit of the major fimbriae. Regulates fimbrial length. These filamentous pili are attached to the cell surface; they mediate biofilm formation, adhesion onto host cells and onto other bacteria that are part of the oral microbiome. Fimbriae of P.gingivalis are major virulence factors. The polypeptide is Major fimbrium anchoring subunit FimB (Porphyromonas gingivalis (strain ATCC BAA-308 / W83)).